Reading from the N-terminus, the 903-residue chain is DNA mismatch repair protein MutS (903 aa).

655-662 (GPNMAGKS) serves as a coordination point for ATP.

The protein belongs to the DNA mismatch repair MutS family.

Its function is as follows. This protein is involved in the repair of mismatches in DNA. It is possible that it carries out the mismatch recognition step. This protein has a weak ATPase activity. In Caulobacter vibrioides (strain ATCC 19089 / CIP 103742 / CB 15) (Caulobacter crescentus), this protein is DNA mismatch repair protein MutS.